Reading from the N-terminus, the 451-residue chain is Lipase member H (451 aa).

Positions 1–16 are cleaved as a signal peptide; that stretch reads MLRLCFLLSFMCLVKS. N66 carries an N-linked (GlcNAc...) asparagine glycan. The Nucleophile role is filled by S154. D178 serves as the catalytic Charge relay system. An intrachain disulfide couples C233 to C246. H248 serves as the catalytic Charge relay system. 3 cysteine pairs are disulfide-bonded: C270/C281, C284/C292, and C427/C446.

The protein belongs to the AB hydrolase superfamily. Lipase family. Interacts with TTMP/C3orf52.

The protein localises to the secreted. The protein resides in the cell membrane. It catalyses the reaction 1-hexadecanoyl-2-(9Z-octadecenoyl)-sn-glycero-3-phosphate + H2O = 2-(9Z-octadecenoyl)-sn-glycero-3-phosphate + hexadecanoate + H(+). In terms of biological role, hydrolyzes specifically phosphatidic acid (PA) to produce 2-acyl lysophosphatidic acid (LPA; a potent bioactive lipid mediator) and fatty acid. Does not hydrolyze other phospholipids, like phosphatidylserine (PS), phosphatidylcholine (PC) and phosphatidylethanolamine (PE) or triacylglycerol (TG). The polypeptide is Lipase member H (Liph) (Rattus norvegicus (Rat)).